The primary structure comprises 316 residues: MGKTLIFIKLSSLNECIKYSTIISKIARELSIHKGNELYIWVSCSEMCQKRTKHLFRELQNALCELYLSSATTNDSSLLSVVPTIVLFEYWSNIQLGSITDSWNSVYYSENAKDQILNIPAKSFQSIGPDVLNEIHNIEHLPKKDESEDSGKEINNMVSAVGGTFDHLHVGHKVLLTLTAWFGVKEVIVGVSGDELLKKKVQKEFLENIQKRKEEVSNFLHSIKEDINCRVVTIHDPFGPTITDAEIDSLIVSEETKTGATAVQEERVKRGLPELSIYCIDLLYPAQELNLKDNNSLKVSSTAIREELAKLAYKNK.

This sequence to yeast YGR277c.

This is an uncharacterized protein from Schizosaccharomyces pombe (strain 972 / ATCC 24843) (Fission yeast).